A 447-amino-acid polypeptide reads, in one-letter code: Protein O-GlcNAcase (447 aa).

The 277-residue stretch at 1–277 (MLTGVIEGFY…TTGAYLADPD (277 aa)) folds into the GH84 domain. 3 residues coordinate a protein: Gly8, Lys39, and Asp115. The Proton donor role is filled by Asp116. A protein contacts are provided by residues Tyr160, 219-221 (WDN), Asp226, and Asn254.

This sequence belongs to the glycosyl hydrolase 84 family.

It catalyses the reaction 3-O-(N-acetyl-beta-D-glucosaminyl)-L-seryl-[protein] + H2O = N-acetyl-D-glucosamine + L-seryl-[protein]. The enzyme catalyses 3-O-(N-acetyl-beta-D-glucosaminyl)-L-threonyl-[protein] + H2O = L-threonyl-[protein] + N-acetyl-D-glucosamine. Inhibited by PUGNac (O-(2-acetamido-2-deoxy-D-glucopyranosylidene)amino-N-phenylcarbamate). Cleaves GlcNAc from O-glycosylated proteins. Can use p-nitrophenyl-beta-GlcNAc and 4-methylumbelliferone-GlcNAc as substrate (in vitro). The protein is Protein O-GlcNAcase of Oceanicola granulosus (strain ATCC BAA-861 / DSM 15982 / KCTC 12143 / HTCC2516).